Consider the following 258-residue polypeptide: MVLITVLANLLILQLSYAQKSSKLVFGGDECNINEHRSLVVLFNSSGFLCAGTLINKEWVLTAAHCDSENFQMQLGVHSKKVPNKDEETRDPKEKFICPNRKKNDEKDKDIMLIRLNRPVSNSEHIALLSLPSSPPSVGSVCRIMGWGTISPTKEIYPDVPHCADINILDHAVCRAAYSGWLATSTTLCAGILEGGKDSCHGDSGGPLICNGQFQGIVSLGRHPCGHPDEPGVYTKVFDYTDWIQSIIAGNTDAACPP.

Residues 1–18 (MVLITVLANLLILQLSYA) form the signal peptide. A propeptide spanning residues 19–24 (QKSSKL) is cleaved from the precursor. In terms of domain architecture, Peptidase S1 spans 25–249 (VFGGDECNIN…YTDWIQSIIA (225 aa)). N-linked (GlcNAc...) asparagine glycosylation occurs at Asn-44. A disulfide bond links Cys-50 and Cys-66. Active-site charge relay system residues include His-65 and Asp-110. 3 disulfides stabilise this stretch: Cys-142/Cys-210, Cys-174/Cys-189, and Cys-200/Cys-225. Catalysis depends on Ser-204, which acts as the Charge relay system.

It belongs to the peptidase S1 family. Snake venom subfamily. Monomer. Post-translationally, N-glycosylated. PubMed:17034951 shows that it contains approximately 10% carbohydrates, PubMed:10871053 shows that it contains approximately 20% carbohydrates. As to expression, expressed by the venom gland.

The protein localises to the secreted. Its activity is regulated as follows. Inhibited by the serine protease inhibitors NPGB, PMSF, p-aminobenzamidine and aprotinin. Not inhibited by soybean trypsin inhibitor or EDTA. Functionally, snake venom serine protease that activates plasminogen. Weakly hydrolyzes the alpha chain of human fibrinogen without releasing fibrinopeptide A. Does not hydrolyze plasma kallikrein or factor Xa. Does not clot fibrinogen. Does not affect platelet function. Induces hypotensive effects on rats. Shows a preferential cleavage at Lys-|-Xaa over Arg-|-Xaa bonds. The protein is Venom plasminogen activator LV-PA of Lachesis muta muta (Bushmaster).